We begin with the raw amino-acid sequence, 183 residues long: Large ribosomal subunit protein uL6 (183 aa).

This sequence belongs to the universal ribosomal protein uL6 family. In terms of assembly, part of the 50S ribosomal subunit.

Functionally, this protein binds to the 23S rRNA, and is important in its secondary structure. It is located near the subunit interface in the base of the L7/L12 stalk, and near the tRNA binding site of the peptidyltransferase center. The chain is Large ribosomal subunit protein uL6 from Moorella thermoacetica (strain ATCC 39073 / JCM 9320).